Consider the following 196-residue polypeptide: dCTP deaminase, dUMP-forming (196 aa).

Residues Lys-101 to Arg-106, Asp-119, Thr-127 to Glu-129, Gln-148, Tyr-162, and Gln-174 contribute to the dCTP site. Glu-129 acts as the Proton donor/acceptor in catalysis.

The protein belongs to the dCTP deaminase family. Homotrimer.

It catalyses the reaction dCTP + 2 H2O = dUMP + NH4(+) + diphosphate. It functions in the pathway pyrimidine metabolism; dUMP biosynthesis; dUMP from dCTP: step 1/1. In terms of biological role, bifunctional enzyme that catalyzes both the deamination of dCTP to dUTP and the hydrolysis of dUTP to dUMP without releasing the toxic dUTP intermediate. The sequence is that of dCTP deaminase, dUMP-forming from Thermobifida fusca (strain YX).